A 561-amino-acid polypeptide reads, in one-letter code: Urocanate hydratase (561 aa).

NAD(+) is bound by residues 52-53 (GG), Gln-130, 176-178 (GMG), Glu-196, Arg-201, 242-243 (NA), 263-267 (QTSAH), 273-274 (YL), and Tyr-322. Residue Cys-410 is part of the active site. Gly-492 is a binding site for NAD(+).

It belongs to the urocanase family. The cofactor is NAD(+).

It is found in the cytoplasm. The catalysed reaction is 4-imidazolone-5-propanoate = trans-urocanate + H2O. Its pathway is amino-acid degradation; L-histidine degradation into L-glutamate; N-formimidoyl-L-glutamate from L-histidine: step 2/3. In terms of biological role, catalyzes the conversion of urocanate to 4-imidazolone-5-propionate. This chain is Urocanate hydratase, found in Salmonella choleraesuis (strain SC-B67).